A 445-amino-acid chain; its full sequence is Trigger factor (445 aa).

Residues 162–247 form the PPIase FKBP-type domain; the sequence is GDQITMDAVG…VKAVHTAEPT (86 aa).

The protein belongs to the FKBP-type PPIase family. Tig subfamily.

The protein resides in the cytoplasm. It carries out the reaction [protein]-peptidylproline (omega=180) = [protein]-peptidylproline (omega=0). Its function is as follows. Involved in protein export. Acts as a chaperone by maintaining the newly synthesized protein in an open conformation. Functions as a peptidyl-prolyl cis-trans isomerase. The chain is Trigger factor from Rickettsia bellii (strain OSU 85-389).